The following is a 285-amino-acid chain: Ribosomal RNA large subunit methyltransferase F (285 aa).

Belongs to the methyltransferase superfamily. METTL16/RlmF family.

It is found in the cytoplasm. It carries out the reaction adenosine(1618) in 23S rRNA + S-adenosyl-L-methionine = N(6)-methyladenosine(1618) in 23S rRNA + S-adenosyl-L-homocysteine + H(+). Functionally, specifically methylates the adenine in position 1618 of 23S rRNA. The chain is Ribosomal RNA large subunit methyltransferase F from Christiangramia forsetii (strain DSM 17595 / CGMCC 1.15422 / KT0803) (Gramella forsetii).